The sequence spans 120 residues: Purkinje cell protein 2 (120 aa).

2 consecutive GoLoco domains span residues 7–29 (QEGFFNLLTHVQGDRMEEQRCSL) and 47–69 (MDNLMDMLVNTQGRRMDDQRVTV). The tract at residues 16–120 (HVQGDRMEEQ…SSPQPQTQAP (105 aa)) is disordered. Residues 108–120 (RRNSSPQPQTQAP) are compositionally biased toward polar residues. Position 111 is a phosphoserine (Ser-111).

Cerebellum (Purkinje cells) and retinal bipolar neurons.

May function as a cell-type specific modulator for G protein-mediated cell signaling. This is Purkinje cell protein 2 (Pcp2) from Mus musculus (Mouse).